Here is a 491-residue protein sequence, read N- to C-terminus: Aspartyl/glutamyl-tRNA(Asn/Gln) amidotransferase subunit B (491 aa).

This sequence belongs to the GatB/GatE family. GatB subfamily. In terms of assembly, heterotrimer of A, B and C subunits.

The enzyme catalyses L-glutamyl-tRNA(Gln) + L-glutamine + ATP + H2O = L-glutaminyl-tRNA(Gln) + L-glutamate + ADP + phosphate + H(+). The catalysed reaction is L-aspartyl-tRNA(Asn) + L-glutamine + ATP + H2O = L-asparaginyl-tRNA(Asn) + L-glutamate + ADP + phosphate + 2 H(+). Allows the formation of correctly charged Asn-tRNA(Asn) or Gln-tRNA(Gln) through the transamidation of misacylated Asp-tRNA(Asn) or Glu-tRNA(Gln) in organisms which lack either or both of asparaginyl-tRNA or glutaminyl-tRNA synthetases. The reaction takes place in the presence of glutamine and ATP through an activated phospho-Asp-tRNA(Asn) or phospho-Glu-tRNA(Gln). The polypeptide is Aspartyl/glutamyl-tRNA(Asn/Gln) amidotransferase subunit B (Prochlorococcus marinus (strain NATL1A)).